We begin with the raw amino-acid sequence, 160 residues long: Dihydrofolate reductase (160 aa).

Positions 1 to 160 (MLIAIWAMTQ…NVNYYRKKQQ (160 aa)) constitute a DHFR domain. Residue 5 to 7 (IWA) participates in substrate binding. NADP(+)-binding positions include 6-7 (WA) and 14-19 (IGNNNT). Glu-27 serves as a coordination point for substrate. Residue 43–46 (GRKT) participates in NADP(+) binding. A substrate-binding site is contributed by Arg-57. NADP(+) is bound by residues 62–65 (LSKD) and 101–106 (CGGKSV). Ser-120 provides a ligand contact to substrate.

It belongs to the dihydrofolate reductase family.

The enzyme catalyses (6S)-5,6,7,8-tetrahydrofolate + NADP(+) = 7,8-dihydrofolate + NADPH + H(+). The protein operates within cofactor biosynthesis; tetrahydrofolate biosynthesis; 5,6,7,8-tetrahydrofolate from 7,8-dihydrofolate: step 1/1. In terms of biological role, key enzyme in folate metabolism. Catalyzes an essential reaction for de novo glycine and purine synthesis, and for DNA precursor synthesis. This is Dihydrofolate reductase (folA) from Mycoplasma genitalium (strain ATCC 33530 / DSM 19775 / NCTC 10195 / G37) (Mycoplasmoides genitalium).